The following is an 86-amino-acid chain: Sugar transporter SemiSWEET (86 aa).

3 helical membrane-spanning segments follow: residues 3 to 23 (PFLI…AYAP), 37 to 57 (ISLG…IYGL), and 61 to 81 (DAPL…ILVM). A PQ-loop domain is found at 6 to 63 (IKLIGFAAATCTTVAYAPQFIKVLKTRSARDISLGMFLVMVLGLALWLIYGLLSGDAP).

In terms of assembly, homodimer. Homooligomer.

The protein resides in the cell membrane. Functionally, mediates sucrose transmembrane transport down a concentration gradient. This is Sugar transporter SemiSWEET from Bradyrhizobium diazoefficiens (strain JCM 10833 / BCRC 13528 / IAM 13628 / NBRC 14792 / USDA 110).